A 120-amino-acid chain; its full sequence is Large ribosomal subunit protein bL20 (120 aa).

The protein belongs to the bacterial ribosomal protein bL20 family.

In terms of biological role, binds directly to 23S ribosomal RNA and is necessary for the in vitro assembly process of the 50S ribosomal subunit. It is not involved in the protein synthesizing functions of that subunit. This Paracidovorax citrulli (strain AAC00-1) (Acidovorax citrulli) protein is Large ribosomal subunit protein bL20.